A 172-amino-acid chain; its full sequence is Shikimate kinase (172 aa).

ATP is bound at residue 11–16 (GAGKST). Position 15 (S15) interacts with Mg(2+). Substrate-binding residues include D33, R57, and G79. ATP is bound at residue R117. R136 contacts substrate. ATP is bound at residue R153.

It belongs to the shikimate kinase family. Monomer. The cofactor is Mg(2+).

It localises to the cytoplasm. It carries out the reaction shikimate + ATP = 3-phosphoshikimate + ADP + H(+). It participates in metabolic intermediate biosynthesis; chorismate biosynthesis; chorismate from D-erythrose 4-phosphate and phosphoenolpyruvate: step 5/7. In terms of biological role, catalyzes the specific phosphorylation of the 3-hydroxyl group of shikimic acid using ATP as a cosubstrate. This chain is Shikimate kinase, found in Pseudomonas fluorescens (strain Pf0-1).